The chain runs to 289 residues: Cyclin-dependent kinase 2 homolog (289 aa).

In terms of domain architecture, Protein kinase spans 4-285 (YHGLEKIGEG…AKQAIEHPYF (282 aa)). Residues 10 to 18 (IGEGTYGVV) and K32 each bind ATP. T14 carries the phosphothreonine modification. A Phosphotyrosine modification is found at Y15. D126 (proton acceptor) is an active-site residue. A Phosphothreonine modification is found at T159.

The protein belongs to the protein kinase superfamily. CMGC Ser/Thr protein kinase family. CDC2/CDKX subfamily. May form a complex composed of at least the catalytic subunit CRK2 and a cyclin. Mg(2+) serves as cofactor.

Its subcellular location is the cytoplasm. It catalyses the reaction L-seryl-[protein] + ATP = O-phospho-L-seryl-[protein] + ADP + H(+). It carries out the reaction L-threonyl-[protein] + ATP = O-phospho-L-threonyl-[protein] + ADP + H(+). The enzyme catalyses [DNA-directed RNA polymerase] + ATP = phospho-[DNA-directed RNA polymerase] + ADP + H(+). With respect to regulation, phosphorylation at Thr-14 or Tyr-15 inactivates the enzyme, while phosphorylation at Thr-159 activates it. Serine/threonine-protein kinase. Involved in the control of the cell cycle. Required for entry into S-phase and mitosis. Probable component of the kinase complex that phosphorylates the repetitive C-terminus of RNA polymerase II. This is Cyclin-dependent kinase 2 homolog from Plasmodium yoelii yoelii.